The primary structure comprises 436 residues: Chaperone SurA (436 aa).

A signal peptide spans 1–30 (MKFFQRPERRLKQWGLALLLAASALLPARA). 2 consecutive PpiC domains span residues 180–281 (ETEY…KLVD) and 291–389 (VTQT…QVLE).

The protein localises to the periplasm. It catalyses the reaction [protein]-peptidylproline (omega=180) = [protein]-peptidylproline (omega=0). In terms of biological role, chaperone involved in the correct folding and assembly of outer membrane proteins. Recognizes specific patterns of aromatic residues and the orientation of their side chains, which are found more frequently in integral outer membrane proteins. May act in both early periplasmic and late outer membrane-associated steps of protein maturation. The chain is Chaperone SurA from Thiobacillus denitrificans (strain ATCC 25259 / T1).